A 947-amino-acid polypeptide reads, in one-letter code: Plasma membrane ATPase 2 (947 aa).

Positions 1-103 (MSSTEAKQYK…TDGVHAGQRV (103 aa)) are disordered. The Cytoplasmic portion of the chain corresponds to 1 to 144 (MSSTEAKQYK…AEENESLIVK (144 aa)). Basic and acidic residues predominate over residues 7–22 (KQYKEKPSKEYLHASD). The span at 26-61 (PANNSAASSSSSSSTSTSASSSAAAVPRKAAAASAA) shows a compositional bias: low complexity. Positions 62–74 (DDSDSDEDIDQLI) are enriched in acidic residues. A helical membrane pass occupies residues 145–165 (FLMFFVGPIQFVMEAAAILAA). Residues 166–169 (GLSD) lie on the Extracellular side of the membrane. The chain crosses the membrane as a helical span at residues 170-189 (WVDVGVICALLLLNASVGFI). Topologically, residues 190 to 320 (QEFQAGSIVD…VEGHFTEVLN (131 aa)) are cytoplasmic. A helical transmembrane segment spans residues 321–342 (GIGIILLVLVIATLLLVWTACF). Residues 343–353 (YRTVGIVSILR) are Extracellular-facing. Residues 354-376 (YTLGITIIGVPVGLPAVVTTTMA) form a helical membrane-spanning segment. Topologically, residues 377-748 (VGAAYLAKKQ…IAILNNSLDI (372 aa)) are cytoplasmic. The active-site 4-aspartylphosphate intermediate is the Asp407. Mg(2+)-binding residues include Asp663 and Asp667. A helical membrane pass occupies residues 749 to 767 (NLIVFIAIFADVATLTIAY). Over 768–783 (DNAPYAPEPVKWNLPR) the chain is Extracellular. The chain crosses the membrane as a helical span at residues 784-803 (LWGMSIILGIVLAIGSWITL). The Cytoplasmic segment spans residues 804 to 853 (TTMFLPNGGIIQNFGAMNGVMFLQISLTENWLIFVTRAAGPFWSSIPSWQ). The helical transmembrane segment at 854–874 (LAGAVFAVDIIATMFTLFGWW) threads the bilayer. The Extracellular portion of the chain corresponds to 875-886 (SENWTDIVSVVR). A helical membrane pass occupies residues 887–903 (VWIWSIGIFCVLGGFYY). Residues 904-947 (IMSTSQAFDRLMNGKSLKEKKSTRSVEDFMAAMQRVSTQHEKSS) are Cytoplasmic-facing.

Belongs to the cation transport ATPase (P-type) (TC 3.A.3) family. Type IIIA subfamily.

The protein localises to the cell membrane. It catalyses the reaction ATP + H2O + H(+)(in) = ADP + phosphate + 2 H(+)(out). Its function is as follows. The plasma membrane ATPase of plants and fungi is a hydrogen ion pump. The proton gradient it generates drives the active transport of nutrients by H(+)-symport. The resulting external acidification and/or internal alkinization may mediate growth responses. In Saccharomyces cerevisiae (strain ATCC 204508 / S288c) (Baker's yeast), this protein is Plasma membrane ATPase 2 (PMA2).